The sequence spans 619 residues: Probable transporter mch1 (619 aa).

12 helical membrane-spanning segments follow: residues 88 to 108, 120 to 140, 147 to 167, 184 to 204, 219 to 239, 261 to 281, 377 to 397, 428 to 448, 480 to 500, 515 to 535, 541 to 561, and 589 to 609; these read VISC…PLFL, AVSI…GYLC, PLAL…AFAY, VMVV…LAAV, IMLA…SQVA, FLFL…GLRI, TMWW…AYIN, IIAL…DFFA, LAFL…LSSP, LIGL…SVVW, GTNW…WGVI, and FWAV…ILAW.

It belongs to the major facilitator superfamily.

It localises to the vacuole membrane. Functionally, probable transporter. The sequence is that of Probable transporter mch1 (mch1) from Aspergillus fumigatus (strain ATCC MYA-4609 / CBS 101355 / FGSC A1100 / Af293) (Neosartorya fumigata).